The chain runs to 350 residues: Protein O-mannose kinase (350 aa).

Methionine 1 carries the N-acetylmethionine modification. Over 1 to 20 (MEKQPQNSRRGLAPREVPPA) the chain is Cytoplasmic. Residues 21-43 (VGLLLIMALMNTLLYLCLDHFFI) form a helical; Signal-anchor for type II membrane protein membrane-spanning segment. Over 44 to 350 (APRQSTVDPT…AMMSQAREML (307 aa)) the chain is Lumenal. The region spanning 81–350 (VRQLKRVGEG…AMMSQAREML (270 aa)) is the Protein kinase domain. Residues asparagine 165, asparagine 220, and asparagine 235 are each glycosylated (N-linked (GlcNAc...) asparagine).

It belongs to the protein kinase superfamily. Ser/Thr protein kinase family. STKL subfamily. In terms of tissue distribution, highest expression is observed in brain, skeletal muscle, kidney and heart in fetal and adult tissues.

It localises to the endoplasmic reticulum membrane. It catalyses the reaction 3-O-[beta-D-GalNAc-(1-&gt;3)-beta-D-GlcNAc-(1-&gt;4)-alpha-D-Man]-L-Thr-[protein] + ATP = 3-O-[beta-D-GalNAc-(1-&gt;3)-beta-D-GlcNAc-(1-&gt;4)-(O-6-P-alpha-D-Man)]-Thr-[protein] + ADP + H(+). Functionally, protein O-mannose kinase that specifically mediates phosphorylation at the 6-position of an O-mannose of the trisaccharide (N-acetylgalactosamine (GalNAc)-beta-1,3-N-acetylglucosamine (GlcNAc)-beta-1,4-mannose) to generate phosphorylated O-mannosyl trisaccharide (N-acetylgalactosamine-beta-1,3-N-acetylglucosamine-beta-1,4-(phosphate-6-)mannose). Phosphorylated O-mannosyl trisaccharide is a carbohydrate structure present in alpha-dystroglycan (DAG1), which is required for binding laminin G-like domain-containing extracellular proteins with high affinity. Only shows kinase activity when the GalNAc-beta-3-GlcNAc-beta-terminus is linked to the 4-position of O-mannose, suggesting that this disaccharide serves as the substrate recognition motif. This Homo sapiens (Human) protein is Protein O-mannose kinase (POMK).